The sequence spans 1064 residues: Carbamoyl phosphate synthase large chain (1064 aa).

A carboxyphosphate synthetic domain region spans residues 1 to 401; the sequence is MPKRADIKKI…ALMKAIRSLE (401 aa). The ATP site is built by R129, R169, G175, G176, K208, I210, E215, G241, I242, H243, Q284, and E298. The region spanning 133–327 is the ATP-grasp 1 domain; it reads KQLMEALKEP…IAKMAAKIAI (195 aa). 3 residues coordinate Mg(2+): Q284, E298, and N300. Mn(2+) is bound by residues Q284, E298, and N300. Residues 402–546 form an oligomerization domain region; the sequence is IGTFALDDLT…YSTYELENES (145 aa). The segment at 547-929 is carbamoyl phosphate synthetic domain; it reads LKEKRPSVLV…ALYKAFVAAG (383 aa). Residues 671–861 enclose the ATP-grasp 2 domain; the sequence is NQVIKKLDLS…LAQLATRVML (191 aa). 10 residues coordinate ATP: R707, S746, L748, E752, G777, V778, H779, S780, Q820, and E832. Mg(2+) is bound by residues Q820, E832, and N834. 3 residues coordinate Mn(2+): Q820, E832, and N834. One can recognise an MGS-like domain in the interval 930 to 1064; the sequence is FKVHEHGNVL…VSAINKGDKS (135 aa). The interval 930–1064 is allosteric domain; that stretch reads FKVHEHGNVL…VSAINKGDKS (135 aa).

The protein belongs to the CarB family. Composed of two chains; the small (or glutamine) chain promotes the hydrolysis of glutamine to ammonia, which is used by the large (or ammonia) chain to synthesize carbamoyl phosphate. Tetramer of heterodimers (alpha,beta)4. Mg(2+) serves as cofactor. Requires Mn(2+) as cofactor.

The catalysed reaction is hydrogencarbonate + L-glutamine + 2 ATP + H2O = carbamoyl phosphate + L-glutamate + 2 ADP + phosphate + 2 H(+). The enzyme catalyses hydrogencarbonate + NH4(+) + 2 ATP = carbamoyl phosphate + 2 ADP + phosphate + 2 H(+). It participates in amino-acid biosynthesis; L-arginine biosynthesis; carbamoyl phosphate from bicarbonate: step 1/1. It functions in the pathway pyrimidine metabolism; UMP biosynthesis via de novo pathway; (S)-dihydroorotate from bicarbonate: step 1/3. In terms of biological role, large subunit of the glutamine-dependent carbamoyl phosphate synthetase (CPSase). CPSase catalyzes the formation of carbamoyl phosphate from the ammonia moiety of glutamine, carbonate, and phosphate donated by ATP, constituting the first step of 2 biosynthetic pathways, one leading to arginine and/or urea and the other to pyrimidine nucleotides. The large subunit (synthetase) binds the substrates ammonia (free or transferred from glutamine from the small subunit), hydrogencarbonate and ATP and carries out an ATP-coupled ligase reaction, activating hydrogencarbonate by forming carboxy phosphate which reacts with ammonia to form carbamoyl phosphate. The protein is Carbamoyl phosphate synthase large chain of Oenococcus oeni (strain ATCC BAA-331 / PSU-1).